The following is a 477-amino-acid chain: Histidine--tRNA ligase (477 aa).

This sequence belongs to the class-II aminoacyl-tRNA synthetase family. As to quaternary structure, homodimer.

The protein localises to the cytoplasm. It catalyses the reaction tRNA(His) + L-histidine + ATP = L-histidyl-tRNA(His) + AMP + diphosphate + H(+). In Xanthomonas campestris pv. campestris (strain ATCC 33913 / DSM 3586 / NCPPB 528 / LMG 568 / P 25), this protein is Histidine--tRNA ligase (hisS).